The primary structure comprises 53 residues: UPF0391 membrane protein BPSS2216 (53 aa).

A run of 2 helical transmembrane segments spans residues 5–25 (ALVF…GIAA) and 30–50 (IAKI…VLGV).

This sequence belongs to the UPF0391 family.

The protein resides in the cell membrane. In Burkholderia pseudomallei (strain K96243), this protein is UPF0391 membrane protein BPSS2216.